The primary structure comprises 671 residues: MESIEQQLIELRTTLRHHEYLYHVMDAPEIPDAEYDRLMRELRELETKHPELITPDSPTQRVGAAPLAAFSQIRHEVPMLSLDNVFDEESFLAFNKRVQDRLKSNEKVTWCCELKLDGLAVSILYENGVLVSAATRGDGTTGEDITSNVRTIRAIPLKLHGENIPARLEVRGEVFLPQAGFEKINEDARRTGGKVFANPRNAAAGSLRQLDPRITAKRPLTFFCYGVGVLEGGELPDTHLGRLMQFKAWGLPVSDRVTLCESAEEVLAFYHEVEKDRPTLGFDIDGVVIKVNSLAQQEQLGFVARAPRWAVAFKFPAQEQMTFVRDVEFQVGRTGAITPVARLEPVHVAGVLVSNATLHNADEIERLGLRIGDKVVIRRAGDVIPQVVNVVLSERPEDTREVVFPTHCPVCGSDVERVEGEAVARCTGGLICGAQRKESLKHFVSRRAMDVDGMGDKIIDQLVEKEYVHTPADLFKLTAVKLTGLERMGPKSAQNVVNALEKAKETTFARFLYALGIREVGEATAAGLAAYFGTLEALEAASIEELQKVPDVGIVVASHVHNFFAEESNRNVISELLAEGVHWPEPIVINAEEIDSPFAGKTVVLTGSLSQMSRDDAKARLVELGAKVAGSVSKKTDLVIAGEAAGSKLAKAQELGIEVIDETEMLRLLGS.

NAD(+) contacts are provided by residues 32–36, 81–82, and glutamate 113; these read DAEYD and SL. The N6-AMP-lysine intermediate role is filled by lysine 115. Residues arginine 136, glutamate 173, lysine 290, and lysine 314 each coordinate NAD(+). Residues cysteine 408, cysteine 411, cysteine 426, and cysteine 432 each contribute to the Zn(2+) site. Residues 593 to 671 enclose the BRCT domain; that stretch reads EIDSPFAGKT…ETEMLRLLGS (79 aa).

This sequence belongs to the NAD-dependent DNA ligase family. LigA subfamily. Requires Mg(2+) as cofactor. Mn(2+) is required as a cofactor.

It catalyses the reaction NAD(+) + (deoxyribonucleotide)n-3'-hydroxyl + 5'-phospho-(deoxyribonucleotide)m = (deoxyribonucleotide)n+m + AMP + beta-nicotinamide D-nucleotide.. In terms of biological role, DNA ligase that catalyzes the formation of phosphodiester linkages between 5'-phosphoryl and 3'-hydroxyl groups in double-stranded DNA using NAD as a coenzyme and as the energy source for the reaction. It is essential for DNA replication and repair of damaged DNA. The chain is DNA ligase from Escherichia coli O127:H6 (strain E2348/69 / EPEC).